The chain runs to 560 residues: Proteasome-associated ATPase (560 aa).

Residues M1–A19 show a composition bias toward basic and acidic residues. The interval M1–Q21 is disordered. The stretch at R16–K55 forms a coiled coil. Residue G237–L242 participates in ATP binding. A docks into pockets in the proteasome alpha-ring region spans residues Y559–L560.

The protein belongs to the AAA ATPase family. In terms of assembly, homohexamer. Assembles into a hexameric ring structure that caps the 20S proteasome core. Strongly interacts with the prokaryotic ubiquitin-like protein Pup through a hydrophobic interface; the interacting region of ARC lies in its N-terminal coiled-coil domain. There is one Pup binding site per ARC hexamer ring. Upon ATP-binding, the C-terminus of ARC interacts with the alpha-rings of the proteasome core, possibly by binding to the intersubunit pockets.

It functions in the pathway protein degradation; proteasomal Pup-dependent pathway. ATPase which is responsible for recognizing, binding, unfolding and translocation of pupylated proteins into the bacterial 20S proteasome core particle. May be essential for opening the gate of the 20S proteasome via an interaction with its C-terminus, thereby allowing substrate entry and access to the site of proteolysis. Thus, the C-termini of the proteasomal ATPase may function like a 'key in a lock' to induce gate opening and therefore regulate proteolysis. This chain is Proteasome-associated ATPase, found in Beutenbergia cavernae (strain ATCC BAA-8 / DSM 12333 / CCUG 43141 / JCM 11478 / NBRC 16432 / NCIMB 13614 / HKI 0122).